Here is a 126-residue protein sequence, read N- to C-terminus: Probable flagellum biosynthesis repressor protein FlbT (126 aa).

The protein belongs to the FlbT family.

In terms of biological role, has a post-transcriptional repressor function in flagellum biogenesis. Associates with the 5'-UTR of fljK mRNA and promotes its degradation. This chain is Probable flagellum biosynthesis repressor protein FlbT, found in Rhodopseudomonas palustris (strain ATCC BAA-98 / CGA009).